We begin with the raw amino-acid sequence, 498 residues long: MEKYILSIDQGTTSSRAILFNQKGEIAGVAQREFKQYFPQSGWVEHDANEIWTSVLAVMTEVINENDVRADQIAGIGITNQRETTVVWDKHTGRPIYHAIVWQSRQTQSICSELKQQGYEQTFRDKTGLLLDPYFAGTKVKWILDNVEGAREKAENGDLLFGTIDTWLVWKLSGKAAHITDYSNASRTLMFNIHDLEWDDELLELLTVPKNMLPEVKPSSEVYGKTIDYHFYGQEVPIAGVAGDQQAALFGQACFERGDVKNTYGTGGFMLMNTGDKAVKSESGLLTTIAYGIDGKVNYALEGSIFVSGSAIQWLRDGLRMINSAPQSESYATRVDSTEGVYVVPAFVGLGTPYWDSEARGAIFGLTRGTEKEHFIRATLESLCYQTRDVMEAMSKDSGIDVQSLRVDGGAVKNNFIMQFQADIVNTSVERPEIQETTALGAAYLAGLAVGFWESKDDIAKNWKLEEKFDPKMDEGEREKLYRGWKKAVEATQVFKTE.

Thr-12 is a binding site for ADP. Positions 12, 13, and 14 each coordinate ATP. Thr-12 contributes to the sn-glycerol 3-phosphate binding site. Arg-16 lines the ADP pocket. Sn-glycerol 3-phosphate is bound by residues Arg-82, Glu-83, and Tyr-134. Glycerol is bound by residues Arg-82, Glu-83, and Tyr-134. His-230 bears the Phosphohistidine; by HPr mark. Asp-244 provides a ligand contact to sn-glycerol 3-phosphate. The glycerol site is built by Asp-244 and Gln-245. 2 residues coordinate ADP: Thr-266 and Gly-309. Residues Thr-266, Gly-309, Gln-313, and Gly-410 each coordinate ATP. ADP-binding residues include Gly-410 and Asn-414.

The protein belongs to the FGGY kinase family. As to quaternary structure, homotetramer and homodimer (in equilibrium). The phosphoenolpyruvate-dependent sugar phosphotransferase system (PTS), including enzyme I, and histidine-containing protein (HPr) are required for the phosphorylation, which leads to the activation of the enzyme.

The enzyme catalyses glycerol + ATP = sn-glycerol 3-phosphate + ADP + H(+). It functions in the pathway polyol metabolism; glycerol degradation via glycerol kinase pathway; sn-glycerol 3-phosphate from glycerol: step 1/1. With respect to regulation, activated by phosphorylation and inhibited by fructose 1,6-bisphosphate (FBP). Its function is as follows. Key enzyme in the regulation of glycerol uptake and metabolism. Catalyzes the phosphorylation of glycerol to yield sn-glycerol 3-phosphate. This is Glycerol kinase from Staphylococcus aureus (strain MRSA252).